A 314-amino-acid polypeptide reads, in one-letter code: Ribosomal RNA small subunit methyltransferase H (314 aa).

Residues Gly36 to His38, Asp56, Phe80, Asp102, and Gln109 contribute to the S-adenosyl-L-methionine site.

Belongs to the methyltransferase superfamily. RsmH family.

It is found in the cytoplasm. The catalysed reaction is cytidine(1402) in 16S rRNA + S-adenosyl-L-methionine = N(4)-methylcytidine(1402) in 16S rRNA + S-adenosyl-L-homocysteine + H(+). Specifically methylates the N4 position of cytidine in position 1402 (C1402) of 16S rRNA. The polypeptide is Ribosomal RNA small subunit methyltransferase H (Citrobacter koseri (strain ATCC BAA-895 / CDC 4225-83 / SGSC4696)).